The chain runs to 474 residues: Aspartyl/glutamyl-tRNA(Asn/Gln) amidotransferase subunit B (474 aa).

It belongs to the GatB/GatE family. GatB subfamily. As to quaternary structure, heterotrimer of A, B and C subunits.

The enzyme catalyses L-glutamyl-tRNA(Gln) + L-glutamine + ATP + H2O = L-glutaminyl-tRNA(Gln) + L-glutamate + ADP + phosphate + H(+). The catalysed reaction is L-aspartyl-tRNA(Asn) + L-glutamine + ATP + H2O = L-asparaginyl-tRNA(Asn) + L-glutamate + ADP + phosphate + 2 H(+). Functionally, allows the formation of correctly charged Asn-tRNA(Asn) or Gln-tRNA(Gln) through the transamidation of misacylated Asp-tRNA(Asn) or Glu-tRNA(Gln) in organisms which lack either or both of asparaginyl-tRNA or glutaminyl-tRNA synthetases. The reaction takes place in the presence of glutamine and ATP through an activated phospho-Asp-tRNA(Asn) or phospho-Glu-tRNA(Gln). This Coprothermobacter proteolyticus (strain ATCC 35245 / DSM 5265 / OCM 4 / BT) protein is Aspartyl/glutamyl-tRNA(Asn/Gln) amidotransferase subunit B.